We begin with the raw amino-acid sequence, 104 residues long: Pyrimidine/purine nucleoside phosphorylase (104 aa).

Belongs to the nucleoside phosphorylase PpnP family.

The enzyme catalyses a purine D-ribonucleoside + phosphate = a purine nucleobase + alpha-D-ribose 1-phosphate. It carries out the reaction adenosine + phosphate = alpha-D-ribose 1-phosphate + adenine. It catalyses the reaction cytidine + phosphate = cytosine + alpha-D-ribose 1-phosphate. The catalysed reaction is guanosine + phosphate = alpha-D-ribose 1-phosphate + guanine. The enzyme catalyses inosine + phosphate = alpha-D-ribose 1-phosphate + hypoxanthine. It carries out the reaction thymidine + phosphate = 2-deoxy-alpha-D-ribose 1-phosphate + thymine. It catalyses the reaction uridine + phosphate = alpha-D-ribose 1-phosphate + uracil. The catalysed reaction is xanthosine + phosphate = alpha-D-ribose 1-phosphate + xanthine. Functionally, catalyzes the phosphorolysis of diverse nucleosides, yielding D-ribose 1-phosphate and the respective free bases. Can use uridine, adenosine, guanosine, cytidine, thymidine, inosine and xanthosine as substrates. Also catalyzes the reverse reactions. The polypeptide is Pyrimidine/purine nucleoside phosphorylase (Thiobacillus denitrificans (strain ATCC 25259 / T1)).